Reading from the N-terminus, the 267-residue chain is Thiamine pyrophosphokinase 3 (267 aa).

The protein belongs to the thiamine pyrophosphokinase family.

The protein localises to the cytoplasm. It localises to the cytosol. It catalyses the reaction thiamine + ATP = thiamine diphosphate + AMP + H(+). It functions in the pathway cofactor biosynthesis; thiamine diphosphate biosynthesis; thiamine diphosphate from thiamine: step 1/1. Functionally, catalyzes the phosphorylation of thiamine to thiamine pyrophosphate (TPP). TPP is an active cofactor for enzymes involved in glycolysis and energy production. Plant leaves require high levels of TPP for photosynthesis and carbohydrate metabolism. This Oryza sativa subsp. japonica (Rice) protein is Thiamine pyrophosphokinase 3 (TPK3).